Reading from the N-terminus, the 1623-residue chain is ABC transporter C family member 2 (1623 aa).

9 helical membrane passes run 37-57 (FVLG…IWLA), 76-96 (FLAL…IMGI), 109-129 (FEAF…VMIL), 145-165 (FAVI…LSVK), 172-192 (VLYL…LLFM), 336-356 (AWMG…GVLC), 440-460 (VASL…TVII), 527-547 (FILN…FTLL), and 557-577 (FTSL…PNII). In terms of domain architecture, ABC transmembrane type-1 1 spans 302–582 (FWWGGFWKIG…LPNIITQVVN (281 aa)). Residues 614-838 (ISIRNGYFSW…GPLFQRLMEN (225 aa)) form the ABC transporter 1 domain. 649 to 656 (GSTGEGKT) is a binding site for ATP. The disordered stretch occupies residues 842–890 (VEEYSEENGEAEADQTAEQPVANGNTNGLQMDGSDDKKSKEGNKKGGKS). Over residues 845 to 856 (YSEENGEAEADQ) the composition is skewed to acidic residues. The segment covering 857-870 (TAEQPVANGNTNGL) has biased composition (polar residues). Over residues 875-885 (SDDKKSKEGNK) the composition is skewed to basic and acidic residues. The next 6 helical transmembrane spans lie at 914–934 (ALGG…TEVF), 955–975 (GPLF…LVTL), 1032–1054 (AVFV…LIGI), 1058–1077 (LSLW…YLYY), 1143–1163 (LGIR…SFAV), and 1177–1197 (STMG…TGVL). In terms of domain architecture, ABC transmembrane type-1 2 spans 921 to 1205 (VMMLLLCYVL…VLRLASLAEN (285 aa)). The interaction with calmodulin and FKP42/TWD1 stretch occupies residues 1236-1251 (WPSSGSIKFEDVVLRY). The ABC transporter 2 domain maps to 1242–1476 (IKFEDVVLRY…EGSSFSKMVQ (235 aa)). 1276 to 1283 (GRTGAGKS) contacts ATP.

It belongs to the ABC transporter superfamily. ABCC family. Conjugate transporter (TC 3.A.1.208) subfamily. In terms of assembly, interacts with FKBP42/TWD1 and probably with calmodulin (CaM). In terms of tissue distribution, ubiquitous, at low levels.

Its subcellular location is the vacuole membrane. The enzyme catalyses ATP + H2O + xenobioticSide 1 = ADP + phosphate + xenobioticSide 2.. Reciprocal promotion of DNP-GS and E(2)17betaG uptake. E(2)17betaG uptake is also stimulated by GSH and S-methyl-glutathione (S-methyl-GS), and, to a lower extent, by GSSG and C3G-GS. Metolachlor-GS and decyl-GS slightly inhibit E(2)17betaG uptake. Functionally, pump for glutathione S-conjugates. Mediates the transport of S-conjugates such as GSH, S-(2,4-dinitrophenyl)-glutathione (DNP-GS), GSSG, cyanidin 3-glucoside-GS (C3G-GS) and metolachlor-GS (MOC-GS), glucuronides such as 17-beta-estradiol 17-(beta-D-glucuronide) (E(2)17betaG), and of the chlorophyll catabolite such as B.napus nonfluorescent chlorophyll catabolite (Bn-NCC-1). This chain is ABC transporter C family member 2 (ABCC2), found in Arabidopsis thaliana (Mouse-ear cress).